Consider the following 539-residue polypeptide: MYGGDEYATNSDYYDDYAHTGDPQLDMEYERNYYAARMPDNVKYFLINFCQAIKEGNLYDIQNMYENTFPQISDHHFDKTAWPEEQEVAAIVDNDKVFLILYKELYYRHIHARIPGGPKLEQRINSFFNYCDFFNLIISAQNPVMLELPDIWLWELVDEFVYQFQNFAQYRARLTEKSQDEIQQLCVNHSNEWSILCILNVLHSLVDISNIKKQLEAISQGVDPQTVAGDFGKLSFYKMLGYFSLVGLLRVHSLLGDYYQAIKVLEPIEIHKKSAYSHIPACQISTSYYVGFAYMMMRRYADAIRTFSDILLYIQRTKQLYSTRSYQNDQINKQAEQMYHLLAICLVLHPQCIDESIQQVLREKNYHDAMFKMQCGDLEVFKSFFVFACPRFVSPCPPAVDAPMDDYVKDPMEHQLQVFMDEVRQQKDLPTTRSYLKLYTTLPLTKLASFIDPNASEDDVSKLLIRLLCFKHKMRNLVWSKGPSGLEGTFKSGSELDFYIDDDMIHIADTKVSHRYGDFFVRKILKFNDLNRKLKNINI.

One can recognise a PCI domain in the interval 306 to 514 (TFSDILLYIQ…IHIADTKVSH (209 aa)).

Belongs to the eIF-3 subunit L family. As to quaternary structure, component of the eukaryotic translation initiation factor 3 (eIF-3) complex. The eIF-3 complex interacts with pix.

It is found in the cytoplasm. Its function is as follows. Component of the eukaryotic translation initiation factor 3 (eIF-3) complex, which is involved in protein synthesis of a specialized repertoire of mRNAs and, together with other initiation factors, stimulates binding of mRNA and methionyl-tRNAi to the 40S ribosome. The eIF-3 complex specifically targets and initiates translation of a subset of mRNAs involved in cell proliferation. The sequence is that of Eukaryotic translation initiation factor 3 subunit L from Drosophila melanogaster (Fruit fly).